A 378-amino-acid polypeptide reads, in one-letter code: tRNA-specific 2-thiouridylase MnmA (378 aa).

ATP-binding positions include 7 to 14 (GLSGGVDS) and Met33. The interaction with target base in tRNA stretch occupies residues 102 to 104 (NPD). The active-site Nucleophile is the Cys107. Cys107 and Cys209 are oxidised to a cystine. Position 132 (Gly132) interacts with ATP. The segment at 159-161 (KDQ) is interaction with tRNA. The active-site Cysteine persulfide intermediate is the Cys209. Positions 316-317 (RY) are interaction with tRNA.

The protein belongs to the MnmA/TRMU family.

Its subcellular location is the cytoplasm. The enzyme catalyses S-sulfanyl-L-cysteinyl-[protein] + uridine(34) in tRNA + AH2 + ATP = 2-thiouridine(34) in tRNA + L-cysteinyl-[protein] + A + AMP + diphosphate + H(+). Functionally, catalyzes the 2-thiolation of uridine at the wobble position (U34) of tRNA, leading to the formation of s(2)U34. This chain is tRNA-specific 2-thiouridylase MnmA, found in Onion yellows phytoplasma (strain OY-M).